A 591-amino-acid polypeptide reads, in one-letter code: Aspartate--tRNA ligase (591 aa).

E171 contributes to the L-aspartate binding site. The interval 195–198 (QLFK) is aspartate. R217 lines the L-aspartate pocket. ATP-binding positions include 217–219 (RDE) and Q226. Residue H448 coordinates L-aspartate. Residue E482 coordinates ATP. R489 lines the L-aspartate pocket. ATP is bound at residue 534-537 (GLDR).

The protein belongs to the class-II aminoacyl-tRNA synthetase family. Type 1 subfamily. In terms of assembly, homodimer.

It localises to the cytoplasm. It catalyses the reaction tRNA(Asp) + L-aspartate + ATP = L-aspartyl-tRNA(Asp) + AMP + diphosphate. In terms of biological role, catalyzes the attachment of L-aspartate to tRNA(Asp) in a two-step reaction: L-aspartate is first activated by ATP to form Asp-AMP and then transferred to the acceptor end of tRNA(Asp). The protein is Aspartate--tRNA ligase of Aliivibrio fischeri (strain MJ11) (Vibrio fischeri).